The sequence spans 174 residues: Guided entry of tail-anchored proteins factor 1 (174 aa).

Residues 1-8 are Lumenal-facing; it reads MSSAAADH. Residues 9–29 form a helical membrane-spanning segment; that stretch reads WAWLLVLSFVFGCNVLRVLLP. Residues 30 to 99 are Cytoplasmic-facing; sequence SFSSFMSRVL…VKARTAQLAK (70 aa). A coiled-coil region spans residues 39 to 94; the sequence is LQKDAEQESQMRAEIQDMKQELSTVNMMDEFARYARLERKINKMTDKLKTHVKART. The interval 39-97 is interaction with GET3/TRC40; sequence LQKDAEQESQMRAEIQDMKQELSTVNMMDEFARYARLERKINKMTDKLKTHVKARTAQL. The chain crosses the membrane as a helical span at residues 100–120; that stretch reads IKWVISVAFYVLQAALMISLI. The Lumenal segment spans residues 121 to 148; it reads WKYYSVPVAVVPSKWITPLDRLVAFPTR. A helical transmembrane segment spans residues 149-169; it reads VAGGVGITCWILVCNKVVAIV. Residues 170–174 are Cytoplasmic-facing; that stretch reads LHPFS.

The protein belongs to the WRB/GET1 family. Component of the Golgi to ER traffic (GET) complex, which is composed of GET1/WRB, CAMLG/GET2 and GET3. Within the complex, GET1 and CAMLG form a heterotetramer which is stabilized by phosphatidylinositol binding and which binds to the GET3 homodimer. Interacts with CAMLG (via C-terminus). GET3 shows a higher affinity for CAMLG than for GET1.

It is found in the endoplasmic reticulum membrane. Its function is as follows. Required for the post-translational delivery of tail-anchored (TA) proteins to the endoplasmic reticulum. Together with CAMLG/GET2, acts as a membrane receptor for soluble GET3/TRC40, which recognizes and selectively binds the transmembrane domain of TA proteins in the cytosol. Required to ensure correct topology and ER insertion of CAMLG. The polypeptide is Guided entry of tail-anchored proteins factor 1 (Pongo abelii (Sumatran orangutan)).